A 197-amino-acid chain; its full sequence is Probable GTP-binding protein EngB (197 aa).

One can recognise an EngB-type G domain in the interval 26 to 197; the sequence is DLPEIALAGR…TSWDAILESL (172 aa). Residues 34-41, 61-65, 79-82, 146-149, and 178-180 contribute to the GTP site; these read GRSNVGKS, GKTQS, DVPG, TKAD, and FSS. Positions 41 and 63 each coordinate Mg(2+).

It belongs to the TRAFAC class TrmE-Era-EngA-EngB-Septin-like GTPase superfamily. EngB GTPase family. Requires Mg(2+) as cofactor.

Its function is as follows. Necessary for normal cell division and for the maintenance of normal septation. The chain is Probable GTP-binding protein EngB from Streptococcus mutans serotype c (strain ATCC 700610 / UA159).